A 644-amino-acid polypeptide reads, in one-letter code: Archaeal Lon protease (644 aa).

A compositionally biased stretch (polar residues) spans 1–18 (MKTTIKNSRTQESVSYEG). The segment at 1–30 (MKTTIKNSRTQESVSYEGNETKKGTGETLS) is disordered. Residues 1–137 (MKTTIKNSRT…KARSQDEKKN (137 aa)) are Cytoplasmic-facing. 71 to 78 (GEPGVGKS) provides a ligand contact to ATP. The next 2 helical transmembrane spans lie at 138 to 155 (LFMM…FMMN) and 156 to 171 (QFLA…FLAL). The Cytoplasmic segment spans residues 172 to 644 (QQFRPRTTVM…PSIMKKPAMH (473 aa)). One can recognise a Lon proteolytic domain in the interval 438–617 (GGEVGRVNGL…GDVLEHALIG (180 aa)). Catalysis depends on residues Ser-524 and Lys-567.

Belongs to the peptidase S16 family. Archaeal LonB subfamily. As to quaternary structure, homohexamer. Organized in a ring with a central cavity.

It is found in the cell membrane. In terms of biological role, ATP-dependent serine protease that mediates the selective degradation of mutant and abnormal proteins as well as certain short-lived regulatory proteins. Degrades polypeptides processively. The polypeptide is Archaeal Lon protease (Methanothermobacter thermautotrophicus (strain ATCC 29096 / DSM 1053 / JCM 10044 / NBRC 100330 / Delta H) (Methanobacterium thermoautotrophicum)).